The primary structure comprises 80 residues: DinI-like protein Z2083/ECs2153 (80 aa).

The sequence is that of DinI-like protein Z2083/ECs2153 from Escherichia coli O157:H7.